We begin with the raw amino-acid sequence, 333 residues long: Serine racemase (333 aa).

E13 contacts Mg(2+). The ATP site is built by S31, S32, I33, K51, and T52. The active-site Proton acceptor is the K56. At K56 the chain carries N6-(pyridoxal phosphate)lysine. P69 is a Ca(2+) binding site. Residue T71 is modified to Phosphothreonine. T81 serves as a coordination point for Ca(2+). The active-site Proton acceptor is the S84. Position 86 (N86) interacts with pyridoxal 5'-phosphate. An ATP-binding site is contributed by Q89. C113 carries the post-translational modification S-nitrosocysteine. Residue Y121 coordinates ATP. Residue N154 participates in pyridoxal 5'-phosphate binding. Position 178 (D178) interacts with Mg(2+). Positions 185, 186, 187, 188, and 189 each coordinate pyridoxal 5'-phosphate. Positions 210, 214, 216, and 247 each coordinate Mg(2+). 4 residues coordinate Ca(2+): E210, A214, D216, and N247. Residues E210, A214, and D216 each contribute to the Mn(2+) site. K279 provides a ligand contact to ATP. A pyridoxal 5'-phosphate-binding site is contributed by S313. Residue N316 participates in ATP binding.

It belongs to the serine/threonine dehydratase family. In terms of assembly, homodimer. Mg(2+) serves as cofactor. It depends on Mn(2+) as a cofactor. Requires Ca(2+) as cofactor. The cofactor is pyridoxal 5'-phosphate. Post-translationally, S-nitrosylated, leading to decrease the enzyme activity. As to expression, expressed in the cerebellum and frontal cortex (at protein level).

It catalyses the reaction L-serine = D-serine. The enzyme catalyses D-serine = pyruvate + NH4(+). The catalysed reaction is L-serine = pyruvate + NH4(+). With respect to regulation, allosterically activated by magnesium, and possibly also other divalent metal cations. Allosterically activated by ATP, ADP or GTP. Competitively inhibited by malonate. Functionally, catalyzes the synthesis of D-serine from L-serine. D-serine is a key coagonist with glutamate at NMDA receptors. Has dehydratase activity towards both L-serine and D-serine. In Rattus norvegicus (Rat), this protein is Serine racemase (Srr).